Here is a 208-residue protein sequence, read N- to C-terminus: Neuroendocrine protein 7B2 (208 aa).

An N-terminal signal peptide occupies residues 1–26 (MGMYSAIPLALPMVLLMVYGLTPSLG). A disulfide bond links Cys-120 and Cys-129. Ser-204 carries the post-translational modification Phosphoserine.

The protein belongs to the 7B2 family. In terms of assembly, interacts with pcsk2 early in the secretory pathway. Dissociation occurs at later stages. Post-translationally, proteolytically cleaved in the Golgi by a furin-like convertase to generate bioactive peptides. Sulfated on tyrosine residues.

Its subcellular location is the secreted. Its function is as follows. Acts as a molecular chaperone for pcsk2, preventing its premature activation in the regulated secretory pathway. Binds to inactive pcsk2 in the endoplasmic reticulum and facilitates its transport from there to later compartments of the secretory pathway where it is proteolytically matured and activated. Also required for cleavage of pcsk2 but does not appear to be involved in its folding. The protein is Neuroendocrine protein 7B2 (scg5.L) of Xenopus laevis (African clawed frog).